Here is a 150-residue protein sequence, read N- to C-terminus: Large ribosomal subunit protein bL9 (150 aa).

It belongs to the bacterial ribosomal protein bL9 family.

Its function is as follows. Binds to the 23S rRNA. The sequence is that of Large ribosomal subunit protein bL9 from Yersinia enterocolitica serotype O:8 / biotype 1B (strain NCTC 13174 / 8081).